The primary structure comprises 581 residues: MANAPHGGVLKDLLVRDAALHDSLLEEARSLNDIFLTERQLCDLELILNGGFSPLEGFMDEQDYTSVVETLRLAPFNGHKYGHVFPIPITLDVSQEDINTLGLKQGARVALRDPRDDAALAILTVSDIYRPNKATEAEKVMGADDIAHPSVAYLRNNVKEFYVGGKVQAIQAPTHFDYVPLRYTPAELRAHFHKLAWRKVVAFQTRNPMHRAHRELTVRAARQRRANVLIHPVVGLTKPGDVDHYTRVRAYQALMPSYPEGMAHLALLPLAMRMAGPREAVWHAVIRKNFGATHFIVGRDHAGPGKNSQGKDFYGPYDAQELVTQFKDELQIEMVPFQAMTYLPGSDEYQPVDEVPKGTPTADISGTELRKRLRTGASIPDWFSYTGVVKVLRESYPPRPQQGFTILLTGLHNSGKDTIARALQVTLQQQGSRSVSLLLGEELRSDLDPQIGRAITPEQKHINLERIGFVAAELTKAGAAVIAAPTAPYERSRQAFKKQVVGSGGGNYFLVHVATPLEWCEKVDRRGLYKAARAGEIKNLTGVDDVYEAPENADLVCDLRIDTVPEIVHSIIMILESQNLV.

Positions 1-176 (MANAPHGGVL…VQAIQAPTHF (176 aa)) are N-terminal. The interval 177–401 (DYVPLRYTPA…LRESYPPRPQ (225 aa)) is catalytic. Residue glutamine 204 coordinates sulfate. ATP-binding positions include 204–207 (QTRN) and 298–301 (GRDH). Catalysis depends on residues threonine 205, arginine 206, and asparagine 207. Residue arginine 206 participates in sulfate binding. Alanine 302 is a binding site for sulfate. ATP is bound at residue methionine 340. The segment at 402-581 (QGFTILLTGL…IMILESQNLV (180 aa)) is allosteric regulation domain; adenylyl-sulfate kinase-like. 3'-phosphoadenylyl sulfate-binding positions include 441-444 (EELR), 486-487 (TA), and arginine 526.

It in the N-terminal section; belongs to the sulfate adenylyltransferase family. In the C-terminal section; belongs to the APS kinase family. Homohexamer. Dimer of trimers.

Its subcellular location is the cytoplasm. The catalysed reaction is sulfate + ATP + H(+) = adenosine 5'-phosphosulfate + diphosphate. Its pathway is sulfur metabolism; hydrogen sulfide biosynthesis; sulfite from sulfate: step 1/3. Its activity is regulated as follows. Allosterically inhibited by 3'-phosphoadenosine 5'-phosphosulfate (PAPS). Catalyzes the first intracellular reaction of sulfate assimilation, forming adenosine-5'-phosphosulfate (APS) from inorganic sulfate and ATP. Plays an important role in sulfate activation as a component of the biosynthesis pathway of sulfur-containing amino acids. The sequence is that of Sulfate adenylyltransferase from Cryptococcus neoformans var. grubii serotype A (strain H99 / ATCC 208821 / CBS 10515 / FGSC 9487) (Filobasidiella neoformans var. grubii).